The primary structure comprises 291 residues: Foldase protein PrsA 2 (291 aa).

The N-terminal stretch at 1–20 (MKKKLILGLVMMMALFSLAA) is a signal peptide. Cysteine 21 carries the N-palmitoyl cysteine lipid modification. Cysteine 21 carries the S-diacylglycerol cysteine lipid modification. The 92-residue stretch at 135–226 (QPDITVSHIL…YGYHIIQMDK (92 aa)) folds into the PpiC domain.

This sequence belongs to the PrsA family.

The protein localises to the cell membrane. It carries out the reaction [protein]-peptidylproline (omega=180) = [protein]-peptidylproline (omega=0). Its function is as follows. Plays a major role in protein secretion by helping the post-translocational extracellular folding of several secreted proteins. This is Foldase protein PrsA 2 (prsA2) from Listeria innocua serovar 6a (strain ATCC BAA-680 / CLIP 11262).